Here is a 355-residue protein sequence, read N- to C-terminus: MIETDKLAAERIIAATPTSSHEEVFERALRPRQLDDYVGQEKVRGQLEIFIEAAKRRSEPLDHVLLFGPPGLGKTTLAHIIAREMGVNLRQTSGPVLERAGDLAALLTNLEANDVLFIDEIHRLSPVVEEILYPALEDYQIDIMIGEGPAARSVKLDLQPFTLVGATTRAGMLTNPLRDRFGIVARLEFYDADQLARIVRRSASLLNAHIDPSGALEIAKRSRGTPRIANRLLRRVRDFAEVKADGQITAAVADAALAMLDVDPVGFDLMDRKLLEAILHKFDGGPVGIDNLAAAIGEERDTIEDVLEPYLIQQGFLQRTPRGRVATLLTYRHFGLSAPDAGNAERGMWDTPAGK.

Residues 4–190 (TDKLAAERII…FGIVARLEFY (187 aa)) are large ATPase domain (RuvB-L). Residues leucine 29, arginine 30, glycine 71, lysine 74, threonine 75, threonine 76, 137–139 (EDY), arginine 180, tyrosine 190, and arginine 227 contribute to the ATP site. Threonine 75 serves as a coordination point for Mg(2+). The small ATPAse domain (RuvB-S) stretch occupies residues 191–261 (DADQLARIVR…VADAALAMLD (71 aa)). The interval 264–355 (PVGFDLMDRK…RGMWDTPAGK (92 aa)) is head domain (RuvB-H). DNA contacts are provided by arginine 300, arginine 319, and arginine 324.

The protein belongs to the RuvB family. Homohexamer. Forms an RuvA(8)-RuvB(12)-Holliday junction (HJ) complex. HJ DNA is sandwiched between 2 RuvA tetramers; dsDNA enters through RuvA and exits via RuvB. An RuvB hexamer assembles on each DNA strand where it exits the tetramer. Each RuvB hexamer is contacted by two RuvA subunits (via domain III) on 2 adjacent RuvB subunits; this complex drives branch migration. In the full resolvosome a probable DNA-RuvA(4)-RuvB(12)-RuvC(2) complex forms which resolves the HJ.

The protein localises to the cytoplasm. The catalysed reaction is ATP + H2O = ADP + phosphate + H(+). Its function is as follows. The RuvA-RuvB-RuvC complex processes Holliday junction (HJ) DNA during genetic recombination and DNA repair, while the RuvA-RuvB complex plays an important role in the rescue of blocked DNA replication forks via replication fork reversal (RFR). RuvA specifically binds to HJ cruciform DNA, conferring on it an open structure. The RuvB hexamer acts as an ATP-dependent pump, pulling dsDNA into and through the RuvAB complex. RuvB forms 2 homohexamers on either side of HJ DNA bound by 1 or 2 RuvA tetramers; 4 subunits per hexamer contact DNA at a time. Coordinated motions by a converter formed by DNA-disengaged RuvB subunits stimulates ATP hydrolysis and nucleotide exchange. Immobilization of the converter enables RuvB to convert the ATP-contained energy into a lever motion, pulling 2 nucleotides of DNA out of the RuvA tetramer per ATP hydrolyzed, thus driving DNA branch migration. The RuvB motors rotate together with the DNA substrate, which together with the progressing nucleotide cycle form the mechanistic basis for DNA recombination by continuous HJ branch migration. Branch migration allows RuvC to scan DNA until it finds its consensus sequence, where it cleaves and resolves cruciform DNA. This chain is Holliday junction branch migration complex subunit RuvB, found in Burkholderia ambifaria (strain ATCC BAA-244 / DSM 16087 / CCUG 44356 / LMG 19182 / AMMD) (Burkholderia cepacia (strain AMMD)).